We begin with the raw amino-acid sequence, 491 residues long: Nucleoside transporter 1.2 (491 aa).

6 helical membrane-spanning segments follow: residues 27-47, 82-102, 109-129, 136-156, 173-193, and 209-229; these read FYVY…VNAV, YNLI…LSWF, VRLL…MVVP, AGAV…KSIF, STMM…QIIV, and KIYY…LILL. Over residues 261 to 273 the composition is skewed to basic and acidic residues; the sequence is HTDEHPTHDKEGR. 2 disordered regions span residues 261–280 and 290–309; these read HTDE…SGKE and AAAK…PHEV. A glycan (N-linked (GlcNAc...) asparagine) is linked at N274. Transmembrane regions (helical) follow at residues 333–353, 361–381, 395–415, 427–447, and 460–480; these read MFVA…GIAV, WFST…RFSP, WIIV…LLHS, VMEV…LVLG, and FVAG…GTVL.

The protein belongs to the SLC29A/ENT transporter (TC 2.A.57) family.

It localises to the membrane. It carries out the reaction adenosine(in) + H(+)(in) = adenosine(out) + H(+)(out). It catalyses the reaction uridine(in) + H(+)(in) = uridine(out) + H(+)(out). Functionally, sodium-independent nucleoside:H(+) symporter; transports adenosine with high affinity and uridine with moderate affinity. Can transport cytidine and thymidine. The sequence is that of Nucleoside transporter 1.2 from Leishmania donovani.